A 511-amino-acid chain; its full sequence is Probable cytosol aminopeptidase (511 aa).

Positions 255 and 260 each coordinate Mn(2+). Residue Lys267 is part of the active site. Asp278, Asp337, and Glu339 together coordinate Mn(2+). Arg341 is a catalytic residue. The tract at residues 485–511 (GAAQAVSPKKAARKEPGAAARKARSAQ) is disordered.

It belongs to the peptidase M17 family. The cofactor is Mn(2+).

It is found in the cytoplasm. The enzyme catalyses Release of an N-terminal amino acid, Xaa-|-Yaa-, in which Xaa is preferably Leu, but may be other amino acids including Pro although not Arg or Lys, and Yaa may be Pro. Amino acid amides and methyl esters are also readily hydrolyzed, but rates on arylamides are exceedingly low.. It catalyses the reaction Release of an N-terminal amino acid, preferentially leucine, but not glutamic or aspartic acids.. Its function is as follows. Presumably involved in the processing and regular turnover of intracellular proteins. Catalyzes the removal of unsubstituted N-terminal amino acids from various peptides. This Variovorax paradoxus (strain S110) protein is Probable cytosol aminopeptidase.